The primary structure comprises 449 residues: Chromosomal replication initiator protein DnaA (449 aa).

Residues 1 to 71 are domain I, interacts with DnaA modulators; the sequence is MPSSLWKHCL…LLSHYSSGRI (71 aa). Positions 71–112 are domain II; that stretch reads IEKALLEVGSCSLQPQPHIQAVELTSKSARSSSRVVDRIPES. The segment at 113-329 is domain III, AAA+ region; sequence RLNKNYTFDS…GALRRVIAYS (217 aa). ATP-binding residues include G157, G159, K160, and T161. The tract at residues 330 to 449 is domain IV, binds dsDNA; the sequence is RFTHRPITME…YHNLLKKLST (120 aa).

This sequence belongs to the DnaA family. In terms of assembly, oligomerizes as a right-handed, spiral filament on DNA at oriC.

The protein localises to the cytoplasm. Functionally, plays an essential role in the initiation and regulation of chromosomal replication. ATP-DnaA binds to the origin of replication (oriC) to initiate formation of the DNA replication initiation complex once per cell cycle. Binds the DnaA box (a 9 base pair repeat at the origin) and separates the double-stranded (ds)DNA. Forms a right-handed helical filament on oriC DNA; dsDNA binds to the exterior of the filament while single-stranded (ss)DNA is stabiized in the filament's interior. The ATP-DnaA-oriC complex binds and stabilizes one strand of the AT-rich DNA unwinding element (DUE), permitting loading of DNA polymerase. After initiation quickly degrades to an ADP-DnaA complex that is not apt for DNA replication. Binds acidic phospholipids. The chain is Chromosomal replication initiator protein DnaA from Nitrosococcus oceani (strain ATCC 19707 / BCRC 17464 / JCM 30415 / NCIMB 11848 / C-107).